The primary structure comprises 268 residues: Phosphoethanolamine/phosphocholine phosphatase (268 aa).

Residue aspartate 32 is the Nucleophile of the active site. Mg(2+) contacts are provided by aspartate 32 and aspartate 34. Aspartate 34 functions as the Proton donor in the catalytic mechanism. Residues aspartate 43 and aspartate 123 each coordinate substrate. Aspartate 203 contacts Mg(2+).

The protein belongs to the HAD-like hydrolase superfamily. PHOSPHO family. It depends on Mg(2+) as a cofactor. As to expression, expressed at sites of mineralization in bone and cartilage. Highly expressed in hypertrophic chondrocytes compared to non-chondrogenic tissues. Expressed in chondrocytes but not in heart, liver, lung, kidney, spleen, muscle, adipose tissues not duodenum. In diaphyseal cortical bone, it is expressed in the osteoid layer of the periosteum, forming surfaces of growing osteons, and newly formed osteocytes, whereas it is not expressed in the endosteum and closed osteons. In growth plate cartilage, it is limited to the early hypertrophic chondrocytes and the ossification groove of Ranvier. Highly expressed on the mineralization surfaces of the cartilage remnants and trabecular bone within the primary spongiosa. Expressed in 17-day-old embryonic calvaria, the osteoid present on the intramembranous and periosteal bone surfaces but not in soft tissues examined.

It is found in the extracellular vesicle. It catalyses the reaction phosphoethanolamine + H2O = ethanolamine + phosphate. The catalysed reaction is phosphocholine + H2O = choline + phosphate. In terms of biological role, phosphatase that has a high activity toward phosphoethanolamine (PEA) and phosphocholine (PCho). Involved in the generation of inorganic phosphate for bone mineralization. This Gallus gallus (Chicken) protein is Phosphoethanolamine/phosphocholine phosphatase (PHOSPHO1).